Here is a 586-residue protein sequence, read N- to C-terminus: Kelch-like protein 7 (586 aa).

Positions 44-111 constitute a BTB domain; that stretch reads CDVILTVQER…AYTARISVNS (68 aa). The region spanning 146–248 is the BACK domain; sequence CLGISVLAEC…SKNFLSKTVQ (103 aa). Kelch repeat units follow at residues 294–336, 337–382, 383–430, 431–481, 483–528, and 530–575; these read RIAL…FWDN, VVYI…AAEG, KIYT…EANG, LIYV…FVKD, IFAV…AVGS, and IYVL…CVVD.

As to quaternary structure, homodimer. Component of the BCR(KLHL7) E3 ubiquitin ligase complex, at least composed of CUL3 and KLHL7 and RBX1.

It localises to the nucleus. Its subcellular location is the cytoplasm. It functions in the pathway protein modification; protein ubiquitination. Its function is as follows. Substrate-specific adapter of a BCR (BTB-CUL3-RBX1) E3 ubiquitin ligase complex. The BCR(KLHL7) complex acts by mediating ubiquitination and subsequent degradation of substrate proteins. Probably mediates 'Lys-48'-linked ubiquitination. The protein is Kelch-like protein 7 (Klhl7) of Mus musculus (Mouse).